Here is a 269-residue protein sequence, read N- to C-terminus: MNITRASLPMLNTTCSCRREKWNFLGRYEGTFDYWIGLHRASSKHPWMWTDNTEYNNMFVYHMNAQCLKKPEEGESSPGTGGVHSYKILQRNSLRAISPESSAKLYCCCGVIMVLTVAVVALSVALPATKTEQILINKTYAACPKNWIGVGNKCFYFSEYTSNWTFAQTFCMAQEAQLARFDNEKELNFLMRYKANFDSWIGLHRESSEHPWKWTDNTEYNNMIPIQGVETCAYLSGNGISSSRHYIPRIWICSKLNNYSLHCPTPVPV.

Residues 1-107 (MNITRASLPM…SPESSAKLYC (107 aa)) are Cytoplasmic-facing. A helical; Signal-anchor for type II membrane protein membrane pass occupies residues 108 to 128 (CCGVIMVLTVAVVALSVALPA). The Extracellular segment spans residues 129–269 (TKTEQILINK…SLHCPTPVPV (141 aa)). One can recognise a C-type lectin domain in the interval 150–254 (VGNKCFYFSE…HYIPRIWICS (105 aa)). Asparagine 163 is a glycosylation site (N-linked (GlcNAc...) asparagine). An intrachain disulfide couples cysteine 171 to cysteine 253.

Detected in vagina, eye, tongue, stomach and spleen.

The protein resides in the cell membrane. Functionally, inhibits osteoclast formation. This Mus musculus (Mouse) protein is C-type lectin domain family 2 member G (Clec2g).